Here is a 264-residue protein sequence, read N- to C-terminus: Major prion protein 1 (264 aa).

An N-terminal signal peptide occupies residues 1 to 24 (MVKSHIGSWILVLFVAMWSDVALC). The interaction with GRB2, ERI3 and SYN1 stretch occupies residues 25-241 (KKRPKPGGGW…ESEAYYQRGA (217 aa)). The tract at residues 28–118 (PKPGGGWNTG…QWNKPSKPKT (91 aa)) is disordered. 6 consecutive repeat copies span residues 54–62 (SQGGGGWGQ), 63–70 (PHGGGWGQ), 71–78 (PHGGGWGQ), 79–86 (PHGGGWGQ), 87–94 (PHGGGWGQ), and 95–103 (PHGGGGWGQ). The 6 X 8 AA tandem repeats of P-H-G-G-G-W-G-Q stretch occupies residues 54 to 103 (SQGGGGWGQPHGGGWGQPHGGGWGQPHGGGWGQPHGGGWGQPHGGGGWGQ). A compositionally biased stretch (gly residues) spans 55–107 (QGGGGWGQPHGGGWGQPHGGGWGQPHGGGWGQPHGGGWGQPHGGGGWGQGGTH). Positions 72, 73, 74, 80, 81, 82, 88, 89, 90, 96, 98, and 99 each coordinate Cu(2+). Residues cysteine 190 and cysteine 225 are joined by a disulfide bond. N-linked (GlcNAc...) asparagine glycosylation is found at asparagine 192 and asparagine 208. The GPI-anchor amidated alanine moiety is linked to residue alanine 241. The propeptide at 242–264 (SVILFSSPPVILLISFLIFLIVG) is removed in mature form.

The protein belongs to the prion family. In terms of assembly, monomer and homodimer. Has a tendency to aggregate into amyloid fibrils containing a cross-beta spine, formed by a steric zipper of superposed beta-strands. Soluble oligomers may represent an intermediate stage on the path to fibril formation. Copper binding may promote oligomerization. Interacts with GRB2, APP, ERI3/PRNPIP and SYN1. Mislocalized cytosolically exposed PrP interacts with MGRN1; this interaction alters MGRN1 subcellular location and causes lysosomal enlargement. Interacts with KIAA1191.

It is found in the cell membrane. It localises to the golgi apparatus. In terms of biological role, its primary physiological function is unclear. Has cytoprotective activity against internal or environmental stresses. May play a role in neuronal development and synaptic plasticity. May be required for neuronal myelin sheath maintenance. May play a role in iron uptake and iron homeostasis. Soluble oligomers are toxic to cultured neuroblastoma cells and induce apoptosis (in vitro). Association with GPC1 (via its heparan sulfate chains) targets PRNP to lipid rafts. Also provides Cu(2+) or Zn(2+) for the ascorbate-mediated GPC1 deaminase degradation of its heparan sulfate side chains. The protein is Major prion protein 1 of Tragelaphus strepsiceros (Greater kudu).